We begin with the raw amino-acid sequence, 938 residues long: Myocardin (938 aa).

An MEF2C-binding motif is present at residues 12–27 (IRSKFRSVLQLRLQQR). One copy of the RPEL 1 repeat lies at 18-43 (SVLQLRLQQRRTQEQLANQGIIPPLK). Over residues 48-61 (FHEQRKHLDSDKAK) the composition is skewed to basic and acidic residues. The interval 48-68 (FHEQRKHLDSDKAKNSLKRKA) is disordered. RPEL repeat units lie at residues 62-87 (NSLK…QAST) and 106-131 (DDLN…PVDS). The HDAC5-binding stretch occupies residues 153 to 205 (FEEDSSSDGLSPDQTRSEDPQNSAGSPPDAKASDTPSTGSLGTNQDLASGSEN). The interval 154-281 (EEDSSSDGLS…DQKAEKSPPP (128 aa)) is disordered. 3 stretches are compositionally biased toward polar residues: residues 159 to 177 (SDGL…NSAG), 186 to 203 (DTPS…ASGS), and 210 to 220 (SASQPSHQSDA). Over residues 248–265 (NRHKKPKDPKPKVKKLKY) the composition is skewed to basic residues. The region spanning 371–405 (LDDLKVSELRQQLRIRGLPVSGTKTALMDRLRPFQ) is the SAP domain. A phosphoserine; by GSK3-beta mark is found at Ser-451, Ser-455, Ser-459, and Ser-463. A coiled-coil region spans residues 516 to 561 (EKDKMLVEKQKVINELTWKLQQEQRQVEELRMQLQKQKRNNCSEKK). A phosphoserine; by GSK3-beta mark is found at Ser-626, Ser-630, Ser-634, and Ser-638. Disordered stretches follow at residues 635–678 (PQHS…SSPI) and 693–734 (SDKV…MTRS). Low complexity predominate over residues 699–715 (KFSIPSPTFSKSSSAIS). Residues 717 to 938 (VTQPPSYEDA…SSMDLHLQQW (222 aa)) are required for interaction with and ubiquitination by STUB1. Phosphoserine; by MAPK1 and MAPK3 occurs at positions 815, 862, and 869. The residue at position 896 (Thr-896) is a Phosphothreonine; by MAPK1 and MAPK3.

Homodimer. Interacts with SRF, its association does not depend on specific DNA sequences for ternary complex formation. Interacts with MLLT7/FOXO4. Interacts (via C-terminal) with EP300 (via the CREB-binding domain). Interacts with HDAC4 and HDAC5. Interacts with MEF2C. Interacts (via C-terminus) with STUB1/CHIP. Interacts with PURB. Ubiquitinated; by STUB1/CHIP at the C-terminus, leading to its degradation by the proteasome. Phosphorylation by GSK3B is required for STUB1/CHIP-mediated ubiquitination. Post-translationally, phosphorylation negatively regulates the intrinsic myocardin transcriptional activity. Phosphorylated; by GSK3B. In terms of tissue distribution, expressed in the heart, aorta and bladder. Expressed in smooth muscle cell-containing tissues: stomach, small intestine, colon, lung, placenta and uterus. Very faint expression in prostate and skeletal muscle.

The protein localises to the nucleus. Smooth muscle cells (SM) and cardiac muscle cells-specific transcriptional factor which uses the canonical single or multiple CArG boxes DNA sequence. Acts as a cofactor of serum response factor (SRF) with the potential to modulate SRF-target genes. Plays a crucial role in cardiogenesis, urinary bladder development, and differentiation of the smooth muscle cell lineage (myogenesis). Positively regulates the transcription of genes involved in vascular smooth muscle contraction. The sequence is that of Myocardin (MYOCD) from Homo sapiens (Human).